Consider the following 402-residue polypeptide: Serine/threonine transporter SstT (402 aa).

Transmembrane regions (helical) follow at residues 19–39 (IGVV…AIGL), 43–63 (LFVG…VISA), 86–106 (TFAA…TLIL), 138–158 (AITE…GLAM), 179–199 (VVKW…FTSI), 212–232 (LLIL…NPII), 287–307 (IPLG…ILTL), 327–347 (VVAA…LLLI), and 354–374 (FGIS…VGVI).

The protein belongs to the dicarboxylate/amino acid:cation symporter (DAACS) (TC 2.A.23) family.

Its subcellular location is the cell membrane. It carries out the reaction L-serine(in) + Na(+)(in) = L-serine(out) + Na(+)(out). The enzyme catalyses L-threonine(in) + Na(+)(in) = L-threonine(out) + Na(+)(out). Functionally, involved in the import of serine and threonine into the cell, with the concomitant import of sodium (symport system). The sequence is that of Serine/threonine transporter SstT from Streptococcus agalactiae serotype Ia (strain ATCC 27591 / A909 / CDC SS700).